Here is a 264-residue protein sequence, read N- to C-terminus: Thymidylate synthase (264 aa).

Position 21 (R21) interacts with dUMP. Position 51 (H51) interacts with (6R)-5,10-methylene-5,6,7,8-tetrahydrofolate. DUMP is bound at residue 126–127 (RR). C146 functions as the Nucleophile in the catalytic mechanism. DUMP-binding positions include 166–169 (RSCD), N177, and 207–209 (HLY). Residue D169 coordinates (6R)-5,10-methylene-5,6,7,8-tetrahydrofolate. A263 contributes to the (6R)-5,10-methylene-5,6,7,8-tetrahydrofolate binding site.

The protein belongs to the thymidylate synthase family. Bacterial-type ThyA subfamily. In terms of assembly, homodimer.

The protein resides in the cytoplasm. It carries out the reaction dUMP + (6R)-5,10-methylene-5,6,7,8-tetrahydrofolate = 7,8-dihydrofolate + dTMP. It participates in pyrimidine metabolism; dTTP biosynthesis. In terms of biological role, catalyzes the reductive methylation of 2'-deoxyuridine-5'-monophosphate (dUMP) to 2'-deoxythymidine-5'-monophosphate (dTMP) while utilizing 5,10-methylenetetrahydrofolate (mTHF) as the methyl donor and reductant in the reaction, yielding dihydrofolate (DHF) as a by-product. This enzymatic reaction provides an intracellular de novo source of dTMP, an essential precursor for DNA biosynthesis. This Shewanella amazonensis (strain ATCC BAA-1098 / SB2B) protein is Thymidylate synthase.